Here is a 687-residue protein sequence, read N- to C-terminus: Triadin (687 aa).

Over 1-47 (MTEITAEGNASITTTVIDNKNGSVPKSPGKVLKRTVTEDIVTTFSSP) the chain is Cytoplasmic. A helical membrane pass occupies residues 48-68 (AAWLLVIALIITWSAVAIVMF). Residues 69–687 (DLVDYKNFSA…NSPGQKQQEQ (619 aa)) are Lumenal-facing. Acidic residues predominate over residues 117–130 (DGDEDDEDADEDID). Disordered stretches follow at residues 117 to 265 (DGDE…EQKD), 280 to 643 (GDLK…QKSP), and 660 to 687 (FQFP…QQEQ). Residues 131 to 265 (KGEIEEPPLK…PAVPKHEQKD (135 aa)) show a composition bias toward basic and acidic residues. Over residues 295–306 (LTASRPALSTPS) the composition is skewed to polar residues. Residues Ser303 and Ser306 each carry the phosphoserine modification. A compositionally biased stretch (basic and acidic residues) spans 307-356 (LEEKEKEEKKKVEKKVTSDTKKKEKGEAKKKSEKETVIDGKGKEPGKPPE). Positions 357-370 (TKQTTTKLTTQAAA) are enriched in low complexity. Composition is skewed to basic and acidic residues over residues 371-390 (TKDE…EEKP), 396-431 (EKKE…KEEI), 442-459 (GKKE…DVKP), and 466-501 (LKKE…KEAK). Asn514 carries N-linked (GlcNAc...) asparagine glycosylation. Basic and acidic residues-rich tracts occupy residues 539–583 (TAEK…KVPP) and 594–630 (TRAE…DKEV). Polar residues-rich tracts occupy residues 631 to 643 (TNNV…QKSP) and 667 to 687 (VQHS…QQEQ).

As to quaternary structure, homooligomer of variable subunit number; disulfide-linked. Interacts with CASQ1 in skeletal muscle. Interacts with CASQ2. Interacts with RYR1 in skeletal muscle. Phosphorylated by CaMK2. In terms of processing, N-glycosylated. As to expression, detected in skeletal muscle (at protein level). Detected in skeletal muscle.

It is found in the sarcoplasmic reticulum membrane. It localises to the microsome. The protein localises to the cell membrane. Its subcellular location is the sarcolemma. Functionally, contributes to the regulation of lumenal Ca2+ release via the sarcoplasmic reticulum calcium release channels RYR1 and RYR2, a key step in triggering skeletal and heart muscle contraction. Required for normal organization of the triad junction, where T-tubules and the sarcoplasmic reticulum terminal cisternae are in close contact. Required for normal skeletal muscle strength. Plays a role in excitation-contraction coupling in the heart and in regulating the rate of heart beats. The protein is Triadin of Rattus norvegicus (Rat).